We begin with the raw amino-acid sequence, 84 residues long: Tetrahydromethanopterin S-methyltransferase subunit G (84 aa).

The helical transmembrane segment at 50 to 70 threads the bilayer; the sequence is IGILYGLVIGIILSYILPALI.

Belongs to the MtrG family. The complex is composed of 8 subunits; MtrA, MtrB, MtrC, MtrD, MtrE, MtrF, MtrG and MtrH.

The protein resides in the cell membrane. It catalyses the reaction 5-methyl-5,6,7,8-tetrahydromethanopterin + coenzyme M + 2 Na(+)(in) = 5,6,7,8-tetrahydromethanopterin + methyl-coenzyme M + 2 Na(+)(out). Its pathway is one-carbon metabolism; methanogenesis from CO(2); methyl-coenzyme M from 5,10-methylene-5,6,7,8-tetrahydromethanopterin: step 2/2. In terms of biological role, part of a complex that catalyzes the formation of methyl-coenzyme M and tetrahydromethanopterin from coenzyme M and methyl-tetrahydromethanopterin. This is an energy-conserving, sodium-ion translocating step. In Methanocaldococcus jannaschii (strain ATCC 43067 / DSM 2661 / JAL-1 / JCM 10045 / NBRC 100440) (Methanococcus jannaschii), this protein is Tetrahydromethanopterin S-methyltransferase subunit G.